Consider the following 1073-residue polypeptide: Carbamoyl phosphate synthase large chain (1073 aa).

The interval 2–403 is carboxyphosphate synthetic domain; the sequence is PKRTDIKSIL…SLQKALRGLE (402 aa). Residues arginine 129, arginine 169, glycine 175, glycine 176, glutamate 208, leucine 210, glutamate 215, glycine 241, isoleucine 242, histidine 243, glutamine 285, and glutamate 299 each contribute to the ATP site. One can recognise an ATP-grasp 1 domain in the interval 133–328; that stretch reads DVAMKKIGLE…IAKVAAKLAV (196 aa). Residues glutamine 285, glutamate 299, and asparagine 301 each coordinate Mg(2+). Positions 285, 299, and 301 each coordinate Mn(2+). Residues 404 to 553 form an oligomerization domain region; sequence VGATGFDPKV…YSTYEEECEA (150 aa). Residues 554–936 form a carbamoyl phosphate synthetic domain region; that stretch reads NPSTDREKIM…AFAKAQLGSN (383 aa). Residues 679 to 870 enclose the ATP-grasp 2 domain; the sequence is QHAVDRLKLK…LAKVAARVMA (192 aa). Arginine 715, histidine 754, leucine 756, glutamate 761, glycine 786, valine 787, histidine 788, serine 789, glutamine 829, and glutamate 841 together coordinate ATP. Glutamine 829, glutamate 841, and asparagine 843 together coordinate Mg(2+). Residues glutamine 829, glutamate 841, and asparagine 843 each coordinate Mn(2+). An MGS-like domain is found at 937–1073; sequence STMKKHGRAL…SVQEMHAQIK (137 aa). The tract at residues 937-1073 is allosteric domain; it reads STMKKHGRAL…SVQEMHAQIK (137 aa).

It belongs to the CarB family. In terms of assembly, composed of two chains; the small (or glutamine) chain promotes the hydrolysis of glutamine to ammonia, which is used by the large (or ammonia) chain to synthesize carbamoyl phosphate. Tetramer of heterodimers (alpha,beta)4. It depends on Mg(2+) as a cofactor. Requires Mn(2+) as cofactor.

It carries out the reaction hydrogencarbonate + L-glutamine + 2 ATP + H2O = carbamoyl phosphate + L-glutamate + 2 ADP + phosphate + 2 H(+). The enzyme catalyses hydrogencarbonate + NH4(+) + 2 ATP = carbamoyl phosphate + 2 ADP + phosphate + 2 H(+). It participates in amino-acid biosynthesis; L-arginine biosynthesis; carbamoyl phosphate from bicarbonate: step 1/1. Its pathway is pyrimidine metabolism; UMP biosynthesis via de novo pathway; (S)-dihydroorotate from bicarbonate: step 1/3. Large subunit of the glutamine-dependent carbamoyl phosphate synthetase (CPSase). CPSase catalyzes the formation of carbamoyl phosphate from the ammonia moiety of glutamine, carbonate, and phosphate donated by ATP, constituting the first step of 2 biosynthetic pathways, one leading to arginine and/or urea and the other to pyrimidine nucleotides. The large subunit (synthetase) binds the substrates ammonia (free or transferred from glutamine from the small subunit), hydrogencarbonate and ATP and carries out an ATP-coupled ligase reaction, activating hydrogencarbonate by forming carboxy phosphate which reacts with ammonia to form carbamoyl phosphate. In Escherichia coli O157:H7, this protein is Carbamoyl phosphate synthase large chain.